Reading from the N-terminus, the 304-residue chain is Undecaprenyl-diphosphatase (304 aa).

A run of 7 helical transmembrane segments spans residues 1–21 (MSLL…FLPV), 54–74 (TTLA…AAGL), 90–110 (LAWF…LFEE), 114–134 (ALGN…LLAA), 192–212 (FLLS…KTVP), 225–245 (LVGT…LLGW), and 253–273 (LFVV…WQGV).

Belongs to the UppP family.

The protein localises to the cell inner membrane. It carries out the reaction di-trans,octa-cis-undecaprenyl diphosphate + H2O = di-trans,octa-cis-undecaprenyl phosphate + phosphate + H(+). In terms of biological role, catalyzes the dephosphorylation of undecaprenyl diphosphate (UPP). Confers resistance to bacitracin. This Anaeromyxobacter sp. (strain Fw109-5) protein is Undecaprenyl-diphosphatase.